We begin with the raw amino-acid sequence, 304 residues long: Ribonuclease Z (304 aa).

H63, H65, D67, H68, H143, D213, and H271 together coordinate Zn(2+). D67 functions as the Proton acceptor in the catalytic mechanism.

This sequence belongs to the RNase Z family. As to quaternary structure, homodimer. Requires Zn(2+) as cofactor.

The enzyme catalyses Endonucleolytic cleavage of RNA, removing extra 3' nucleotides from tRNA precursor, generating 3' termini of tRNAs. A 3'-hydroxy group is left at the tRNA terminus and a 5'-phosphoryl group is left at the trailer molecule.. Its function is as follows. Zinc phosphodiesterase, which displays some tRNA 3'-processing endonuclease activity. Probably involved in tRNA maturation, by removing a 3'-trailer from precursor tRNA. This Porphyromonas gingivalis (strain ATCC BAA-308 / W83) protein is Ribonuclease Z.